A 733-amino-acid polypeptide reads, in one-letter code: Leucine-rich repeat neuronal protein 4 (733 aa).

A signal peptide spans 1 to 19; the sequence is MRWTLMLQLLQLLLQLLMA. At 20–676 the chain is on the extracellular side; that stretch reads QSQSLERISQ…CATFTTKPSS (657 aa). 10 LRR repeats span residues 62 to 82, 83 to 106, 107 to 128, 130 to 151, 154 to 175, 178 to 199, 207 to 230, 231 to 253, 256 to 278, and 281 to 302; these read GVTTLNLANRSLESLPSCLPR, TLRSLDGSHNLLRALSEPVLGRLP, ELRVLTLHHNRISVLHWGRDTL, ELRELDLSHNLLTELPPCAGPS, SLRSLALAGNPLRALLPRTFAC, ALRLLNLSCSELGHIAQEAFAG, ALELLDLSGTSLERVESGWIRNLP, KLKSLFLRKMPRLKTLEGDIFKM, NLRQLDCGDSPALTSVHTEIFQD, and NLQVLQFQNCNLSSFGPWNSSQ. N-linked (GlcNAc...) asparagine glycosylation occurs at N70. N183 carries N-linked (GlcNAc...) asparagine glycosylation. 5 N-linked (GlcNAc...) asparagine glycosylation sites follow: N291, N299, N327, N408, and N469. The LRRCT domain occupies 311-364; that stretch reads NPLICSCELAWLLVDVNKTVLHRAADTMCEPALGSTGPFSGPLSLSHLSNVCRS. The disordered stretch occupies residues 395–423; the sequence is STALSAQPGGSQQNITKVPSLTMTSPTQG. Residues 480–518 are disordered; it reads KYLEPLPTSPNPRSLPQTKQRTQATPRALHTDPPQDEIP. The span at 490-504 shows a compositional bias: polar residues; sequence NPRSLPQTKQRTQAT. The 100-residue stretch at 576-675 folds into the Fibronectin type-III domain; sequence TPDPPTLQGV…SCATFTTKPS (100 aa). N619 carries N-linked (GlcNAc...) asparagine glycosylation. A helical transmembrane segment spans residues 677-697; it reads VVIFWGLCTASGLLLVSTLVL. Over 698-733 the chain is Cytoplasmic; the sequence is SVCLWRQRWKPHRQFYDTHLVAFKNPARAEEVTQWE.

It is found in the membrane. Functionally, may play an important role in hippocampus-dependent long-lasting memory. The protein is Leucine-rich repeat neuronal protein 4 (Lrrn4) of Mus musculus (Mouse).